The chain runs to 631 residues: MNSSDEEKQLQLITSLKEQAIGEYEDLRAENQKTKEKCDKIRQERDEAVKKLEEFQKISHMVIEEVNFMQNHLEIEKTCRESAEALATKLNKENKTLKRISMLYMAKLGPDVITEEINIDDEDSTTDTDGAAETCVSVQCQKQIKELRDQIVSVQEEKKILAIELENLKSKLVEVIEEVNKVKQEKTVLNSEVLEQRKVLEKCNRVSMLAVEEYEEMQVNLELEKDLRKKAESFAQEMFIEQNKLKRQSHLLLQSSIPDQQLLKALDENAKLTQQLEEERIQHQQKVKELEEQLENETLHKEIHNLKQQLELLEEDKKELELKYQNSEEKARNLKHSVDELQKRVNQSENSVPPPPPPPPPLPPPPPNPIRSLMSMIRKRSHPSGSGAKKEKATQPETTEEVTDLKRQAVEEMMDRIKKGVHLRPVNQTARPKTKPESSKGCESAVDELKGILGTLNKSTSSRSLKSLDPENSETELERILRRRKVTAEADSSSPTGILATSESKSMPVLGSVSSVTKTALNKKTLEAEFNSPSPPTPEPGEGPRKLEGCTSSKVTFQPPSSIGCRKKYIDGEKQAEPVVVLDPVSTHEPQTKDQVAEKDPTQHKEDEGEIQPENKEDSIENVRETDSSNC.

The residue at position 1 (methionine 1) is an N-acetylmethionine. Phosphoserine occurs at positions 3 and 4. Positions 7–353 (EKQLQLITSL…RVNQSENSVP (347 aa)) form a coiled coil. Position 101 is a phosphoserine; by PAK1 (serine 101). Serine 249 is subject to Phosphoserine. Positions 343-511 (KRVNQSENSV…SESKSMPVLG (169 aa)) are disordered. Positions 352 to 369 (VPPPPPPPPPLPPPPPNP) are enriched in pro residues. At serine 375 the chain carries Phosphoserine. The span at 403–418 (TDLKRQAVEEMMDRIK) shows a compositional bias: basic and acidic residues. Residues 456-465 (LNKSTSSRSL) are compositionally biased toward polar residues. Serine 473 carries the phosphoserine modification. At threonine 487 the chain carries Phosphothreonine. Polar residues predominate over residues 490-505 (ADSSSPTGILATSESK). Position 494 is a phosphoserine (serine 494). The residue at position 496 (threonine 496) is a Phosphothreonine. Phosphoserine is present on residues serine 506, serine 515, serine 532, and serine 534. 2 disordered regions span residues 524–566 (KTLE…IGCR) and 579–631 (VVVL…SSNC). At threonine 537 the chain carries Phosphothreonine. Residues 550-561 (CTSSKVTFQPPS) show a composition bias toward polar residues. Residues 590–631 (PQTKDQVAEKDPTQHKEDEGEIQPENKEDSIENVRETDSSNC) show a composition bias toward basic and acidic residues.

The protein belongs to the shootin family. As to quaternary structure, interacts with L1CAM; this interaction occurs in axonal growth cones. Interacts with actin filament retrograde flow; this interaction is enhanced in a netrin-1- and PAK1-dependent manner and promotes F-actin-substrate coupling and concomitant formation of traction forces at axonal growth cones. Interacts with RUFY3. Interacts with PFN2. Interacts (via N-terminus) with KIF20B; this interaction is direct and promotes the association of SHTN1 to microtubules in primary neurons. Associates with microtubule. In terms of processing, phosphorylated on Ser-101 and Ser-249 by PAK1 through a CDC42- and RAC1-dependent signaling pathway, which enhances its association with F-actin retrograde flow in filopodia and lamellipodia of axonal growth cones. Phosphorylation on Ser-101 and Ser-249 is increased by netrin-1.

Its subcellular location is the perikaryon. It localises to the cell projection. The protein resides in the axon. It is found in the growth cone. The protein localises to the cytoplasm. Its subcellular location is the cytoskeleton. It localises to the filopodium. The protein resides in the lamellipodium. Involved in the generation of internal asymmetric signals required for neuronal polarization and neurite outgrowth. Mediates netrin-1-induced F-actin-substrate coupling or 'clutch engagement' within the axon growth cone through activation of CDC42, RAC1 and PAK1-dependent signaling pathway, thereby converting the F-actin retrograde flow into traction forces, concomitantly with filopodium extension and axon outgrowth. Plays a role in cytoskeletal organization by regulating the subcellular localization of phosphoinositide 3-kinase (PI3K) activity at the axonal growth cone. Also plays a role in regenerative neurite outgrowth. In the developing cortex, cooperates with KIF20B to promote both the transition from the multipolar to the bipolar stage and the radial migration of cortical neurons from the ventricular zone toward the superficial layer of the neocortex. Involved in the accumulation of phosphatidylinositol 3,4,5-trisphosphate (PIP3) in the growth cone of primary hippocampal neurons. This Homo sapiens (Human) protein is Shootin-1.